Consider the following 82-residue polypeptide: Small ribosomal subunit protein bS18 (82 aa).

The segment at 1–20 is disordered; sequence MSEINQTVTRRPFHRRRKTC.

The protein belongs to the bacterial ribosomal protein bS18 family. Part of the 30S ribosomal subunit. Forms a tight heterodimer with protein bS6.

Functionally, binds as a heterodimer with protein bS6 to the central domain of the 16S rRNA, where it helps stabilize the platform of the 30S subunit. The sequence is that of Small ribosomal subunit protein bS18 from Bartonella quintana (strain Toulouse) (Rochalimaea quintana).